Consider the following 303-residue polypeptide: Ribosomal protein L11 methyltransferase (303 aa).

4 residues coordinate S-adenosyl-L-methionine: Thr144, Gly165, Asp187, and Asn235.

Belongs to the methyltransferase superfamily. PrmA family.

The protein localises to the cytoplasm. It carries out the reaction L-lysyl-[protein] + 3 S-adenosyl-L-methionine = N(6),N(6),N(6)-trimethyl-L-lysyl-[protein] + 3 S-adenosyl-L-homocysteine + 3 H(+). Functionally, methylates ribosomal protein L11. This chain is Ribosomal protein L11 methyltransferase, found in Prochlorococcus marinus (strain AS9601).